We begin with the raw amino-acid sequence, 499 residues long: 3-octaprenyl-4-hydroxybenzoate carboxy-lyase (499 aa).

Asparagine 173 is a Mn(2+) binding site. Prenylated FMN contacts are provided by residues 176–178 (IYR), 190–192 (RWL), and 195–196 (RG). Glutamate 239 lines the Mn(2+) pocket. Aspartate 288 acts as the Proton donor in catalysis.

The protein belongs to the UbiD family. Homohexamer. Requires prenylated FMN as cofactor. Mn(2+) is required as a cofactor.

It localises to the cell membrane. It catalyses the reaction a 4-hydroxy-3-(all-trans-polyprenyl)benzoate + H(+) = a 2-(all-trans-polyprenyl)phenol + CO2. Its pathway is cofactor biosynthesis; ubiquinone biosynthesis. In terms of biological role, catalyzes the decarboxylation of 3-octaprenyl-4-hydroxy benzoate to 2-octaprenylphenol, an intermediate step in ubiquinone biosynthesis. This chain is 3-octaprenyl-4-hydroxybenzoate carboxy-lyase, found in Blochmanniella floridana.